Reading from the N-terminus, the 364-residue chain is Fructose-bisphosphate aldolase B (364 aa).

Alanine 2 bears the N-acetylalanine mark. N6-succinyllysine is present on lysine 13. The residue at position 36 (serine 36) is a Phosphoserine. At threonine 39 the chain carries Phosphothreonine. Arginine 43 contributes to the beta-D-fructose 1,6-bisphosphate binding site. At serine 89 the chain carries Phosphoserine. At threonine 119 the chain carries Phosphothreonine. An N6-succinyllysine modification is found at lysine 121. Residue serine 132 is modified to Phosphoserine. Glutamate 188 functions as the Proton acceptor in the catalytic mechanism. The active-site Schiff-base intermediate with dihydroxyacetone-P is the lysine 230. Residues serine 272, serine 276, serine 299, and serine 301 each carry the phosphoserine modification. Position 272–274 (serine 272–glycine 274) interacts with beta-D-fructose 1,6-bisphosphate. Position 304 (arginine 304) interacts with beta-D-fructose 1,6-bisphosphate. Serine 309 bears the Phosphoserine mark. Position 317 is an N6-succinyllysine (lysine 317).

It belongs to the class I fructose-bisphosphate aldolase family. Homotetramer. Interacts with BBS1, BBS2, BBS4 and BBS7. Forms a ternary complex with G6PD and TP53; this interaction is direct.

The protein resides in the cytoplasm. Its subcellular location is the cytosol. It is found in the cytoskeleton. It localises to the microtubule organizing center. The protein localises to the centrosome. The protein resides in the centriolar satellite. The catalysed reaction is beta-D-fructose 1,6-bisphosphate = D-glyceraldehyde 3-phosphate + dihydroxyacetone phosphate. It carries out the reaction beta-D-fructose 1-phosphate = D-glyceraldehyde + dihydroxyacetone phosphate. Its pathway is carbohydrate degradation; glycolysis; D-glyceraldehyde 3-phosphate and glycerone phosphate from D-glucose: step 4/4. It functions in the pathway carbohydrate biosynthesis; gluconeogenesis. The protein operates within carbohydrate metabolism; fructose metabolism. Its function is as follows. Catalyzes the aldol cleavage of fructose 1,6-biphosphate to form two triosephosphates dihydroxyacetone phosphate and D-glyceraldehyde 3-phosphate in glycolysis as well as the reverse stereospecific aldol addition reaction in gluconeogenesis. In fructolysis, metabolizes fructose 1-phosphate derived from the phosphorylation of dietary fructose by fructokinase into dihydroxyacetone phosphate and D-glyceraldehyde. Acts as an adapter independently of its enzymatic activity, exerts a tumor suppressor role by stabilizing the ternary complex with G6PD and TP53 to inhibit G6PD activity and keep oxidative pentose phosphate metabolism in check. The chain is Fructose-bisphosphate aldolase B (Aldob) from Rattus norvegicus (Rat).